A 329-amino-acid polypeptide reads, in one-letter code: RING finger protein 225 (329 aa).

Residues 1–55 (MPCPRPFWLRHSRAPQGSGPSSPGSLSAPRSPSRGEDQEEEEEEEGDGSPGSGPI) form a disordered region. The segment covering 14–32 (APQGSGPSSPGSLSAPRSP) has biased composition (low complexity). Over residues 37–47 (DQEEEEEEEGD) the composition is skewed to acidic residues. The RING-type zinc finger occupies 64–112 (CLICVSSFDGVFKLPKRLDCGHVFCLECLARLSLATAGGGNAVACPVCR). A disordered region spans residues 122–181 (GLPALPTQSGLLPRDARAPPSRQGSVRFDRRRGLLYLRPPPPPPGPRKARAPPPPPPLRL). Residues 159-179 (RPPPPPPGPRKARAPPPPPPL) are compositionally biased toward pro residues. Residues 203–223 (ALAVLVAAGLVVSGVYIFFLI) form a helical membrane-spanning segment. Residues 248–329 (FPPRPPPGSP…RGARRLWGSQ (82 aa)) are disordered. A compositionally biased stretch (acidic residues) spans 281–293 (DALEPEAGPEDPA). Basic and acidic residues predominate over residues 294–304 (EAERTLDRRSD).

The protein localises to the membrane. The chain is RING finger protein 225 from Homo sapiens (Human).